Consider the following 503-residue polypeptide: Probable mitochondrial-processing peptidase subunit alpha-1, mitochondrial (503 aa).

The transit peptide at 1 to 59 (MYRTAASRARALKGVLTRSLRPARYASSSAVAETSSSTPAYLSWLSGGSRAALTSLDMP) directs the protein to the mitochondrion.

This sequence belongs to the peptidase M16 family. Heterodimer of alpha and beta subunits, forming the mitochondrial processing protease (MPP) in which subunit alpha is involved in substrate recognition and binding and subunit beta is the catalytic subunit. Component of the ubiquinol-cytochrome c oxidoreductase (cytochrome b-c1 complex, complex III, CIII), a multisubunit enzyme composed of 10 subunits. The complex is composed of 3 respiratory subunits cytochrome b (MT-CYB), cytochrome c1 (CYC1-1 or CYC1-2) and Rieske protein (UCR1-1 or UCR1-2), 2 core protein subunits MPPalpha1 (or MPPalpha2) and MPPB, and 5 low-molecular weight protein subunits QCR7-1 (or QCR7-2), UCRQ-1 (or UCRQ-2), QCR9, UCRY and probably QCR6-1 (or QCR6-2). The complex exists as an obligatory dimer and forms supercomplexes (SCs) in the inner mitochondrial membrane with NADH-ubiquinone oxidoreductase (complex I, CI), resulting in different assemblies (supercomplexes SCI(1)III(2) and SCI(2)III(4)).

It localises to the mitochondrion matrix. Its subcellular location is the mitochondrion inner membrane. In terms of biological role, substrate recognition and binding subunit of the essential mitochondrial processing protease (MPP), which cleaves the mitochondrial sequence off newly imported precursors proteins. Its function is as follows. Component of the ubiquinol-cytochrome c oxidoreductase, a multisubunit transmembrane complex that is part of the mitochondrial electron transport chain which drives oxidative phosphorylation. The respiratory chain contains 3 multisubunit complexes succinate dehydrogenase (complex II, CII), ubiquinol-cytochrome c oxidoreductase (cytochrome b-c1 complex, complex III, CIII) and cytochrome c oxidase (complex IV, CIV), that cooperate to transfer electrons derived from NADH and succinate to molecular oxygen, creating an electrochemical gradient over the inner membrane that drives transmembrane transport and the ATP synthase. The cytochrome b-c1 complex catalyzes electron transfer from ubiquinol to cytochrome c, linking this redox reaction to translocation of protons across the mitochondrial inner membrane, with protons being carried across the membrane as hydrogens on the quinol. In the process called Q cycle, 2 protons are consumed from the matrix, 4 protons are released into the intermembrane space and 2 electrons are passed to cytochrome c. This Arabidopsis thaliana (Mouse-ear cress) protein is Probable mitochondrial-processing peptidase subunit alpha-1, mitochondrial (MPPalpha1).